A 927-amino-acid polypeptide reads, in one-letter code: BTB/POZ domain-containing protein KCTD19 (927 aa).

The BTB 1 domain occupies 18–72 (NVGGWHFSVPRSKLAQFPDSLLWKEASALTSSENQRLFIDRDGSTFRHVHYYLYT). Ser-270 carries the post-translational modification Phosphoserine. Residues 399–486 (IKLYVGSHWY…YHIPALSEAL (88 aa)) enclose the BTB 2 domain. The interval 664 to 760 (VEEASLHVPS…NANGTDNPGA (97 aa)) is disordered. The segment covering 731–743 (DWGKQRPKDRESP) has biased composition (basic and acidic residues).

Identified in a complex with ZNF541, HDAC1 and HSPA2. Identified in a complex with ZNF541 and HDAC1. Identified in a complex with HDAC1, HDAC2, DNTTIP1 and ZNF541. In terms of tissue distribution, detected in adult testis.

Its subcellular location is the nucleus. Functionally, transcription regulator which is essential for male fertility and for the completion of meiotic prophase in spermatocytes. Regulates progression of the pachytene stage of meiotic prophase and promotes the transcriptional activation activity ZNF541. Required for the organization of chromosomes during metaphase I. The polypeptide is BTB/POZ domain-containing protein KCTD19 (Kctd19) (Mus musculus (Mouse)).